Consider the following 62-residue polypeptide: Temporin-CDYb (62 aa).

The signal sequence occupies residues 1 to 22 (MFTLKKSLLLLFFLGTINLSLC). Residues 23-45 (EEERDADEEERRDDPEERAVQVE) constitute a propeptide that is removed on maturation. Leucine amide is present on Leu-60.

This sequence belongs to the frog skin active peptide (FSAP) family. Temporin subfamily. As to expression, expressed by the skin glands.

It localises to the secreted. Its function is as follows. Antimicrobial peptide. Has low activity against the Gram-positive bacterium S.aureus (MIC&gt;100 uM) and the Gram-negative bacterium E.coli (MIC&gt;100 uM). Has weak hemolytic activity against human erythrocytes. The polypeptide is Temporin-CDYb (Rana dybowskii (Dybovsky's frog)).